The primary structure comprises 100 residues: Small ubiquitin-related modifier 1 (100 aa).

Positions 1–12 (MSANQEEDKKPG) are enriched in basic and acidic residues. The interval 1-21 (MSANQEEDKKPGDGGAHINLK) is disordered. Positions 16–93 (AHINLKVKGQ…IDAMLHQTGG (78 aa)) constitute a Ubiquitin-like domain. Glycine 93 participates in a covalent cross-link: Glycyl lysine isopeptide (Gly-Lys) (interchain with K-? in acceptor proteins).

Belongs to the ubiquitin family. SUMO subfamily. Interacts with SAE2, SCE1, SIZ1 and MMS21. Interacts with HSFA2. Covalently attached to ABI5, FLD, GTE3, HSFA2 and ICE1.

The protein resides in the nucleus. It is found in the cytoplasm. Ubiquitin-like protein which can be covalently attached to target lysines as a monomer. Does not seem to be involved in protein degradation and may function as an antagonist of ubiquitin in the degradation process. Required for the massive protein sumoylation in the nucleus induced by heat shock and controlled by SIZ1. Involved in the regulation of the heat stress transcription factor HSFA2 in acquired thermotolerance. The chain is Small ubiquitin-related modifier 1 from Arabidopsis thaliana (Mouse-ear cress).